The chain runs to 78 residues: Acyl carrier protein (78 aa).

In terms of domain architecture, Carrier spans 2-77; the sequence is SDTEERVKKI…DAVKFIDKAS (76 aa). Position 37 is an O-(pantetheine 4'-phosphoryl)serine (Ser-37).

It belongs to the acyl carrier protein (ACP) family. Post-translationally, 4'-phosphopantetheine is transferred from CoA to a specific serine of apo-ACP by AcpS. This modification is essential for activity because fatty acids are bound in thioester linkage to the sulfhydryl of the prosthetic group.

Its subcellular location is the cytoplasm. It participates in lipid metabolism; fatty acid biosynthesis. Functionally, carrier of the growing fatty acid chain in fatty acid biosynthesis. In Bartonella bacilliformis (strain ATCC 35685 / KC583 / Herrer 020/F12,63), this protein is Acyl carrier protein.